The sequence spans 323 residues: 8-oxo-dGDP phosphatase NUDT18 (323 aa).

Residues 37-167 (RLRKNVCYVV…DILHLVELAA (131 aa)) enclose the Nudix hydrolase domain. Residue Leu-58 participates in Mg(2+) binding. The Nudix box signature appears at 76–97 (GRMEPGETIVEALQREVKEEAG).

It belongs to the Nudix hydrolase family. Requires Mn(2+) as cofactor. It depends on Mg(2+) as a cofactor.

It carries out the reaction 8-oxo-dGDP + H2O = 8-oxo-dGMP + phosphate + H(+). It catalyses the reaction 8-oxo-dADP + H2O = 8-oxo-dAMP + phosphate + H(+). The enzyme catalyses 2-oxo-dADP + H2O = 2-oxo-dAMP + phosphate + H(+). The catalysed reaction is 8-oxo-GDP + H2O = 8-oxo-GMP + phosphate + H(+). Its function is as follows. Mediates the hydrolysis of oxidized nucleoside diphosphate derivatives. Hydrolyzes 8-oxo-7,8-dihydroguanine (8-oxo-Gua)-containing deoxyribo- and ribonucleoside diphosphates to the monophosphates. Hydrolyzes 8-oxo-dGDP and 8-oxo-GDP with the same efficiencies. Also hydrolyzes 8-OH-dADP and 2-OH-dADP. Exhibited no or minimal hydrolysis activity against 8-oxo-dGTP, 8-oxo-GTP, dGTP, GTP, dGDP and GDP. Probably removes oxidized guanine nucleotides from both the DNA and RNA precursor pools. The sequence is that of 8-oxo-dGDP phosphatase NUDT18 from Homo sapiens (Human).